The chain runs to 357 residues: 3-dehydroquinate synthase (357 aa).

NAD(+)-binding positions include 104-108, 128-129, Lys141, and 168-171; these read GVVGD, TT, and FLET. Zn(2+) is bound by residues Glu183, His243, and His260.

The protein belongs to the sugar phosphate cyclases superfamily. Dehydroquinate synthase family. The cofactor is Co(2+). Requires Zn(2+) as cofactor. It depends on NAD(+) as a cofactor.

It is found in the cytoplasm. The enzyme catalyses 7-phospho-2-dehydro-3-deoxy-D-arabino-heptonate = 3-dehydroquinate + phosphate. Its pathway is metabolic intermediate biosynthesis; chorismate biosynthesis; chorismate from D-erythrose 4-phosphate and phosphoenolpyruvate: step 2/7. In terms of biological role, catalyzes the conversion of 3-deoxy-D-arabino-heptulosonate 7-phosphate (DAHP) to dehydroquinate (DHQ). This is 3-dehydroquinate synthase from Streptococcus pyogenes serotype M49 (strain NZ131).